We begin with the raw amino-acid sequence, 3996 residues long: Probable E3 ubiquitin-protein ligase HECTD4 (3996 aa).

A helical transmembrane segment spans residues 282–302 (TCIIRCILVVFQVVFKFFFSP). The span at 1494 to 1510 (PTASEPDTTLTKTSPKN) shows a compositional bias: polar residues. 2 disordered regions span residues 1494–1524 (PTAS…ESEA) and 1616–1637 (PETV…SICR). Threonine 2080 is modified (phosphothreonine). Disordered stretches follow at residues 2219–2245 (FITS…DDIP), 2859–2919 (TSAT…PTVL), 3017–3053 (EDTK…STSS), and 3327–3403 (FDKS…QEVP). The span at 2232 to 2245 (ADDESDDDDDDDIP) shows a compositional bias: acidic residues. A compositionally biased stretch (low complexity) spans 2866–2887 (LSDSSSSSSSSPGQTPQSPSLL). Positions 2888–2897 (SKRKKVKMKR) are enriched in basic residues. Composition is skewed to basic and acidic residues over residues 3017 to 3037 (EDTK…EPEK), 3327 to 3341 (FDKS…EQHP), and 3370 to 3403 (LSEK…QEVP). The 370-residue stretch at 3627-3996 (SGGDPTYAFN…IHYREDPLSG (370 aa)) folds into the HECT domain. Residue cysteine 3964 is the Glycyl thioester intermediate of the active site.

It localises to the membrane. The enzyme catalyses S-ubiquitinyl-[E2 ubiquitin-conjugating enzyme]-L-cysteine + [acceptor protein]-L-lysine = [E2 ubiquitin-conjugating enzyme]-L-cysteine + N(6)-ubiquitinyl-[acceptor protein]-L-lysine.. It functions in the pathway protein modification; protein ubiquitination. E3 ubiquitin-protein ligase which accepts ubiquitin from an E2 ubiquitin-conjugating enzyme in the form of a thioester and then directly transfers the ubiquitin to targeted substrates. This chain is Probable E3 ubiquitin-protein ligase HECTD4 (HECTD4), found in Homo sapiens (Human).